A 289-amino-acid polypeptide reads, in one-letter code: tRNA pseudouridine synthase B (289 aa).

Catalysis depends on Asp38, which acts as the Nucleophile.

Belongs to the pseudouridine synthase TruB family. Type 1 subfamily.

The catalysed reaction is uridine(55) in tRNA = pseudouridine(55) in tRNA. Its function is as follows. Responsible for synthesis of pseudouridine from uracil-55 in the psi GC loop of transfer RNAs. This is tRNA pseudouridine synthase B from Acaryochloris marina (strain MBIC 11017).